The primary structure comprises 736 residues: 1,4-alpha-glucan branching enzyme GlgB (736 aa).

The active-site Nucleophile is the aspartate 415. The Proton donor role is filled by glutamate 470.

Belongs to the glycosyl hydrolase 13 family. GlgB subfamily. Monomer.

It catalyses the reaction Transfers a segment of a (1-&gt;4)-alpha-D-glucan chain to a primary hydroxy group in a similar glucan chain.. It participates in glycan biosynthesis; glycogen biosynthesis. Its function is as follows. Catalyzes the formation of the alpha-1,6-glucosidic linkages in glycogen by scission of a 1,4-alpha-linked oligosaccharide from growing alpha-1,4-glucan chains and the subsequent attachment of the oligosaccharide to the alpha-1,6 position. The sequence is that of 1,4-alpha-glucan branching enzyme GlgB from Paraburkholderia xenovorans (strain LB400).